The following is a 217-amino-acid chain: RING-H2 finger protein ATL40 (217 aa).

The helical transmembrane segment at 28 to 48 (IFLVTTVSFSIIIIIVFVYYL) threads the bilayer. The RING-type; atypical zinc finger occupies 100 to 142 (CAVCLSLLEEKDNARMLPNCKHVFHVSCVDTWLTTQSTCPVCR). Composition is skewed to basic and acidic residues over residues 143–160 (TEAE…REGP) and 186–217 (DSFR…IERQ). The segment at 143-217 (TEAEPSHPRL…QDRELDIERQ (75 aa)) is disordered.

This sequence belongs to the RING-type zinc finger family. ATL subfamily.

The protein resides in the membrane. The enzyme catalyses S-ubiquitinyl-[E2 ubiquitin-conjugating enzyme]-L-cysteine + [acceptor protein]-L-lysine = [E2 ubiquitin-conjugating enzyme]-L-cysteine + N(6)-ubiquitinyl-[acceptor protein]-L-lysine.. The protein operates within protein modification; protein ubiquitination. The chain is RING-H2 finger protein ATL40 (ATL40) from Arabidopsis thaliana (Mouse-ear cress).